A 255-amino-acid polypeptide reads, in one-letter code: 4-hydroxy-tetrahydrodipicolinate reductase (255 aa).

Residues Gly-8–Met-13, Gly-89–Thr-91, and Ser-114–Tyr-117 contribute to the NAD(+) site. His-146 (proton donor/acceptor) is an active-site residue. His-147 serves as a coordination point for (S)-2,3,4,5-tetrahydrodipicolinate. The Proton donor role is filled by Lys-150. Gly-156–Thr-157 contacts (S)-2,3,4,5-tetrahydrodipicolinate.

Belongs to the DapB family.

It is found in the cytoplasm. The enzyme catalyses (S)-2,3,4,5-tetrahydrodipicolinate + NAD(+) + H2O = (2S,4S)-4-hydroxy-2,3,4,5-tetrahydrodipicolinate + NADH + H(+). It carries out the reaction (S)-2,3,4,5-tetrahydrodipicolinate + NADP(+) + H2O = (2S,4S)-4-hydroxy-2,3,4,5-tetrahydrodipicolinate + NADPH + H(+). The protein operates within amino-acid biosynthesis; L-lysine biosynthesis via DAP pathway; (S)-tetrahydrodipicolinate from L-aspartate: step 4/4. Its function is as follows. Catalyzes the conversion of 4-hydroxy-tetrahydrodipicolinate (HTPA) to tetrahydrodipicolinate. This Methanoregula boonei (strain DSM 21154 / JCM 14090 / 6A8) protein is 4-hydroxy-tetrahydrodipicolinate reductase.